We begin with the raw amino-acid sequence, 240 residues long: UDP-2,3-diacylglucosamine hydrolase (240 aa).

Mn(2+) is bound by residues D8, H10, D41, N79, and H114. Residue 79–80 (NR) participates in substrate binding. Substrate contacts are provided by D122, S160, N164, K167, and H195. Residues H195 and H197 each coordinate Mn(2+).

The protein belongs to the LpxH family. The cofactor is Mn(2+).

The protein resides in the cell inner membrane. The enzyme catalyses UDP-2-N,3-O-bis[(3R)-3-hydroxytetradecanoyl]-alpha-D-glucosamine + H2O = 2-N,3-O-bis[(3R)-3-hydroxytetradecanoyl]-alpha-D-glucosaminyl 1-phosphate + UMP + 2 H(+). Its pathway is glycolipid biosynthesis; lipid IV(A) biosynthesis; lipid IV(A) from (3R)-3-hydroxytetradecanoyl-[acyl-carrier-protein] and UDP-N-acetyl-alpha-D-glucosamine: step 4/6. Functionally, hydrolyzes the pyrophosphate bond of UDP-2,3-diacylglucosamine to yield 2,3-diacylglucosamine 1-phosphate (lipid X) and UMP by catalyzing the attack of water at the alpha-P atom. Involved in the biosynthesis of lipid A, a phosphorylated glycolipid that anchors the lipopolysaccharide to the outer membrane of the cell. The sequence is that of UDP-2,3-diacylglucosamine hydrolase from Escherichia fergusonii (strain ATCC 35469 / DSM 13698 / CCUG 18766 / IAM 14443 / JCM 21226 / LMG 7866 / NBRC 102419 / NCTC 12128 / CDC 0568-73).